The chain runs to 71 residues: Omega-conotoxin-like Ac6.4 (71 aa).

The first 22 residues, Met-1 to Ala-22, serve as a signal peptide directing secretion. The propeptide occupies Asp-23–Arg-45. Intrachain disulfides connect Cys-46–Cys-61, Cys-53–Cys-65, and Cys-60–Cys-70. Position 70 is a cysteine amide (Cys-70).

This sequence belongs to the conotoxin O1 superfamily. Expressed by the venom duct.

It is found in the secreted. Omega-conotoxins act at presynaptic membranes, they bind and block voltage-gated calcium channels (Cav). The chain is Omega-conotoxin-like Ac6.4 from Conus achatinus (Little frog cone).